A 211-amino-acid chain; its full sequence is Regulator of G-protein signaling 2 (211 aa).

Disordered regions lie at residues 14 to 33 (RPMD…REKM) and 49 to 68 (LQNS…KQQA). The interval 32 to 66 (KMKRTLLKDWKTRLSYFLQNSSTPGKPKTGKKSKQ) is necessary for membrane association. Positions 79 to 116 (LWSEAFDELLASKYGLAAFRAFLKSEFCEENIEFWLAC) are necessary to inhibit protein synthesis. The 117-residue stretch at 83–199 (AFDELLASKY…LESEFYQDLC (117 aa)) folds into the RGS domain.

As to quaternary structure, interacts with GNAQ. Does not interact with GNAI1 and GNAI3. Interacts with EIF2B5. Interacts with PRKG1 (isoform alpha). In terms of processing, phosphorylated by protein kinase C. Phosphorylation by PRKG1 leads to activation of RGS2 activity. In terms of tissue distribution, expressed in acute myelogenous leukemia (AML) and in acute lymphoblastic leukemia (ALL).

It localises to the cell membrane. The protein resides in the cytoplasm. Its subcellular location is the nucleus. The protein localises to the nucleolus. It is found in the mitochondrion. In terms of biological role, regulates G protein-coupled receptor signaling cascades. Inhibits signal transduction by increasing the GTPase activity of G protein alpha subunits, thereby driving them into their inactive GDP-bound form. It is involved in the negative regulation of the angiotensin-activated signaling pathway. Plays a role in the regulation of blood pressure in response to signaling via G protein-coupled receptors and GNAQ. Plays a role in regulating the constriction and relaxation of vascular smooth muscle. Binds EIF2B5 and blocks its activity, thereby inhibiting the translation of mRNA into protein. The sequence is that of Regulator of G-protein signaling 2 (RGS2) from Homo sapiens (Human).